Reading from the N-terminus, the 817-residue chain is Exocyst complex component 6 (817 aa).

2 coiled-coil regions span residues 87-149 and 247-270; these read QSFV…DQIA and TDAERAKKIQEEARKNASNVEIEV.

Belongs to the SEC15 family. In terms of assembly, the exocyst complex is composed of sec-3/exoc1, sec-5/exoc2, sec-6/exoc3, sec-8/exoc4, sec-10/exoc5, sec-15/exoc6, exo-70/exoc7 and exo-84/exoc8.

Component of the exocyst complex involved in the docking of exocytic vesicles with fusion sites on the plasma membrane. This is Exocyst complex component 6 (sec-15) from Caenorhabditis elegans.